Consider the following 415-residue polypeptide: Plasminogen activator inhibitor 2 (415 aa).

An intrachain disulfide couples Cys5 to Cys405. 3 N-linked (GlcNAc...) asparagine glycosylation sites follow: Asn75, Asn115, and Asn339.

It belongs to the serpin family. Ov-serpin subfamily. In terms of assembly, interacts with PSMB1. In terms of processing, the signal sequence is not cleaved.

It localises to the cytoplasm. The protein resides in the secreted. Its subcellular location is the extracellular space. Its function is as follows. Inhibits urokinase-type plasminogen activator. The monocyte derived PAI-2 is distinct from the endothelial cell-derived PAI-1. This chain is Plasminogen activator inhibitor 2 (SERPINB2), found in Homo sapiens (Human).